A 350-amino-acid chain; its full sequence is Chlorophyll a/b light-harvesting protein PcbA (350 aa).

6 helical membrane-spanning segments follow: residues 26 to 46 (LSAHIAQYALITFWAGGITLF), 62 to 82 (LILIPHLATLGWGIGSGGQVV), 87 to 107 (YFVIGVIHLVASAVFGAGALY), 214 to 234 (IAVVLLAGGFWHINQAPFPWA), 248 to 268 (LSASLAGLSMAGFAAAYFSAV), and 309 to 329 (LCNVHFFLAFFVLQGHLWHAL).

The protein belongs to the PsbB/PsbC family. IsiA/Pcb subfamily. As to quaternary structure, the antenna complex consists of chlorophylls (a and b) and chlorophyll a/b binding proteins. Chlorophyll a serves as cofactor. The cofactor is chlorophyll b.

It is found in the cellular thylakoid membrane. Functionally, the antenna complex functions as a light receptor, it captures and delivers excitation energy to photosystems II and I. The Prochlorales pcb genes are not related to higher plant LHCs. The chain is Chlorophyll a/b light-harvesting protein PcbA (pcbA) from Prochlorothrix hollandica.